The sequence spans 440 residues: MTTTRFAPSPTGYLHVGNLRTALFNYMIARKAGGTFILRIDDTDPERSKPEYVDAIQEDLTWLGLTWDRIEYQSRRLDRYAEAADALRAAGRFYEAFETPTELDLKRKKQLNMGRPPVYDRAALALSEDEKAALRAERGQGVWRFKLDHERITWTDGILGDISIDAASVSDPVLIRGDGQVLYTIASVVDDTEMGVTHVVRGSDHVTNTATQIQIMAALGHGHPEFAHHSLLTGPQGEALSKRLGTLALRDLRAEGIEPMALLSLMARLGSSQPVEVAGSLEALIEGFDLSTFGAAPTKFDRADLFPLTARLLHATPFAEVADEIAALGVPAAQAELFWEVARANITTRADLAGWWQLFRDGGAPLVAEEDRAFVADAFARLPEPPYGPETWGAWTAEVKAASGRKGKGLFMPLRKAVTGLERGPEMADVMRLLQKKPTL.

The 'HIGH' region motif lies at 8 to 18 (PSPTGYLHVGN). Residues 239–243 (ALSKR) carry the 'KMSKS' region motif. K242 is an ATP binding site.

It belongs to the class-I aminoacyl-tRNA synthetase family. Glutamate--tRNA ligase type 1 subfamily. Monomer.

The protein resides in the cytoplasm. It carries out the reaction tRNA(Glu) + L-glutamate + ATP = L-glutamyl-tRNA(Glu) + AMP + diphosphate. Catalyzes the attachment of glutamate to tRNA(Glu) in a two-step reaction: glutamate is first activated by ATP to form Glu-AMP and then transferred to the acceptor end of tRNA(Glu). The chain is Glutamate--tRNA ligase 2 from Dinoroseobacter shibae (strain DSM 16493 / NCIMB 14021 / DFL 12).